The following is a 215-amino-acid chain: Fanconi anemia core complex-associated protein 24 (215 aa).

The segment at 160–215 (LRTVQQIPGVGKVKAPLLLQKFPSIQQLSNASIGELEQVVGQAVAQQIHAFFTQPR) is ruvA domain 2-like.

In terms of assembly, belongs to the multisubunit FA complex composed of FANCA, FANCB, FANCC, FANCE, FANCF, FANCG, FANCL/PHF9, FANCM and FAAP24. Interacts with FANCM.

The protein localises to the nucleus. Functionally, plays a role in DNA repair through recruitment of the FA core complex to damaged DNA. Regulates FANCD2 monoubiquitination upon DNA damage. Induces chromosomal instability as well as hypersensitivity to DNA cross-linking agents, when repressed. Targets FANCM/FAAP24 complex to the DNA, preferentially to single strand DNA. This Homo sapiens (Human) protein is Fanconi anemia core complex-associated protein 24.